The following is a 213-amino-acid chain: Carboxysome shell protein CcmP (213 aa).

BMC circularly permuted domains lie at 4 to 106 and 107 to 211; these read ELRS…RLKP and KIVS…GDRS. The Probably important for pore gating signature appears at 69–70; the sequence is ER.

This sequence belongs to the EutL/PduB family. As to quaternary structure, a dimer of stacked trimers, the same faces interact.

It is found in the carboxysome. Probably part of the carboxysome shell, a polyhedral inclusion where RuBisCO (ribulose bisphosphate carboxylase, rbcL-rbcS) is sequestered. It is thought that this protein controls transport of RuBisCO reactants in and out of the carboxysome; residual densities in the 4 X-ray structures suggest that differing compounds bind in interior pockets, depending on the open or closed state of the pore. This Synechococcus elongatus (strain ATCC 33912 / PCC 7942 / FACHB-805) (Anacystis nidulans R2) protein is Carboxysome shell protein CcmP.